The following is a 183-amino-acid chain: Threonylcarbamoyl-AMP synthase (183 aa).

Positions 1–183 (MNREQIADAL…LRTNQLFRQG (183 aa)) constitute a YrdC-like domain.

It belongs to the SUA5 family. TsaC subfamily.

Its subcellular location is the cytoplasm. It catalyses the reaction L-threonine + hydrogencarbonate + ATP = L-threonylcarbamoyladenylate + diphosphate + H2O. Its function is as follows. Required for the formation of a threonylcarbamoyl group on adenosine at position 37 (t(6)A37) in tRNAs that read codons beginning with adenine. Catalyzes the conversion of L-threonine, HCO(3)(-)/CO(2) and ATP to give threonylcarbamoyl-AMP (TC-AMP) as the acyladenylate intermediate, with the release of diphosphate. This is Threonylcarbamoyl-AMP synthase from Haemophilus influenzae (strain ATCC 51907 / DSM 11121 / KW20 / Rd).